A 386-amino-acid polypeptide reads, in one-letter code: HORMA domain-containing protein 1 (386 aa).

An HORMA domain is found at 24 to 224; that stretch reads TQSLILVKRL…TPFHVLKVKV (201 aa). Disordered regions lie at residues 237-274 and 289-386; these read SIFK…KRDD and EDGN…TPLN. Residues 289 to 313 are compositionally biased toward polar residues; the sequence is EDGNLQSDDSQNSALADSQEKTSQA. A compositionally biased stretch (basic and acidic residues) spans 329–343; that stretch reads QKPDLELKNQKESAR.

The protein resides in the nucleus. The protein localises to the chromosome. Its function is as follows. Plays a key role in meiotic progression by ensuring that sufficient numbers of processed DNA double-strand breaks (DSBs) are available for successful homology search, promoting synaptonemal-complex formation independently and playing key role in the male mid-pachytene checkpoint and the female meiotic prophase checkpoint. The chain is HORMA domain-containing protein 1 (hormad1) from Xenopus laevis (African clawed frog).